Reading from the N-terminus, the 403-residue chain is Methylthioribose-1-phosphate isomerase (403 aa).

Residue Asp280 is the Proton donor of the active site.

The protein belongs to the eIF-2B alpha/beta/delta subunits family. MtnA subfamily.

The protein resides in the cytoplasm. It is found in the nucleus. It catalyses the reaction 5-(methylsulfanyl)-alpha-D-ribose 1-phosphate = 5-(methylsulfanyl)-D-ribulose 1-phosphate. Its pathway is amino-acid biosynthesis; L-methionine biosynthesis via salvage pathway; L-methionine from S-methyl-5-thio-alpha-D-ribose 1-phosphate: step 1/6. In terms of biological role, catalyzes the interconversion of methylthioribose-1-phosphate (MTR-1-P) into methylthioribulose-1-phosphate (MTRu-1-P). The protein is Methylthioribose-1-phosphate isomerase of Eremothecium gossypii (strain ATCC 10895 / CBS 109.51 / FGSC 9923 / NRRL Y-1056) (Yeast).